A 271-amino-acid polypeptide reads, in one-letter code: Hydroxyethylthiazole kinase (271 aa).

M50 provides a ligand contact to substrate. Residues R126 and T172 each coordinate ATP. Residue G199 coordinates substrate.

Belongs to the Thz kinase family. Requires Mg(2+) as cofactor.

The catalysed reaction is 5-(2-hydroxyethyl)-4-methylthiazole + ATP = 4-methyl-5-(2-phosphooxyethyl)-thiazole + ADP + H(+). It functions in the pathway cofactor biosynthesis; thiamine diphosphate biosynthesis; 4-methyl-5-(2-phosphoethyl)-thiazole from 5-(2-hydroxyethyl)-4-methylthiazole: step 1/1. Its function is as follows. Catalyzes the phosphorylation of the hydroxyl group of 4-methyl-5-beta-hydroxyethylthiazole (THZ). This is Hydroxyethylthiazole kinase from Akkermansia muciniphila (strain ATCC BAA-835 / DSM 22959 / JCM 33894 / BCRC 81048 / CCUG 64013 / CIP 107961 / Muc).